A 108-amino-acid polypeptide reads, in one-letter code: Large ribosomal subunit protein P2A (108 aa).

Positions 62 to 108 are disordered; it reads LSSVPSGAPAAAAGGASAAAGGEATEEAAEEEAAEESDDDMSFGLFD. A compositionally biased stretch (low complexity) spans 68-84; sequence GAPAAAAGGASAAAGGE. Residues 85–102 are compositionally biased toward acidic residues; that stretch reads ATEEAAEEEAAEESDDDM. A Phosphoserine modification is found at serine 98.

The protein belongs to the eukaryotic ribosomal protein P1/P2 family.

Functionally, plays an important role in the elongation step of protein synthesis. The polypeptide is Large ribosomal subunit protein P2A (RPP2A) (Candida albicans (Yeast)).